A 131-amino-acid polypeptide reads, in one-letter code: Small ribosomal subunit protein uS8 (131 aa).

It belongs to the universal ribosomal protein uS8 family. As to quaternary structure, part of the 30S ribosomal subunit. Contacts proteins S5 and S12.

One of the primary rRNA binding proteins, it binds directly to 16S rRNA central domain where it helps coordinate assembly of the platform of the 30S subunit. The sequence is that of Small ribosomal subunit protein uS8 from Methylococcus capsulatus (strain ATCC 33009 / NCIMB 11132 / Bath).